Here is a 190-residue protein sequence, read N- to C-terminus: Adenine phosphoribosyltransferase (190 aa).

This sequence belongs to the purine/pyrimidine phosphoribosyltransferase family. In terms of assembly, homodimer.

It localises to the cytoplasm. The enzyme catalyses AMP + diphosphate = 5-phospho-alpha-D-ribose 1-diphosphate + adenine. Its pathway is purine metabolism; AMP biosynthesis via salvage pathway; AMP from adenine: step 1/1. Its function is as follows. Catalyzes a salvage reaction resulting in the formation of AMP, that is energically less costly than de novo synthesis. This Cupriavidus metallidurans (strain ATCC 43123 / DSM 2839 / NBRC 102507 / CH34) (Ralstonia metallidurans) protein is Adenine phosphoribosyltransferase.